The primary structure comprises 510 residues: Bifunctional pantoate ligase/cytidylate kinase (510 aa).

The pantoate--beta-alanine ligase stretch occupies residues 1–276 (MKKVIIRKTE…CGETRLIDHV (276 aa)). 29-36 (MGNLHDGH) serves as a coordination point for ATP. The active-site Proton donor is histidine 36. Glutamine 61 contributes to the (R)-pantoate binding site. Glutamine 61 lines the beta-alanine pocket. 150–153 (GEKD) lines the ATP pocket. Residue glutamine 156 coordinates (R)-pantoate. 187–190 (LSSR) contributes to the ATP binding site. Positions 277-510 (FLMKRRPIIA…DRIPKETEIK (234 aa)) are cytidylate kinase.

The protein in the N-terminal section; belongs to the pantothenate synthetase family. In the C-terminal section; belongs to the cytidylate kinase family. Type 1 subfamily.

It is found in the cytoplasm. It carries out the reaction (R)-pantoate + beta-alanine + ATP = (R)-pantothenate + AMP + diphosphate + H(+). It catalyses the reaction CMP + ATP = CDP + ADP. The enzyme catalyses dCMP + ATP = dCDP + ADP. The protein operates within cofactor biosynthesis; (R)-pantothenate biosynthesis; (R)-pantothenate from (R)-pantoate and beta-alanine: step 1/1. Its function is as follows. Catalyzes the condensation of pantoate with beta-alanine in an ATP-dependent reaction via a pantoyl-adenylate intermediate. In terms of biological role, catalyzes the transfer of a phosphate group from ATP to either CMP or dCMP to form CDP or dCDP and ADP, respectively. In Prochlorococcus marinus (strain MIT 9301), this protein is Bifunctional pantoate ligase/cytidylate kinase.